A 556-amino-acid chain; its full sequence is Formate--tetrahydrofolate ligase (556 aa).

65–72 (TPAGEGKS) contacts ATP.

The protein belongs to the formate--tetrahydrofolate ligase family.

The enzyme catalyses (6S)-5,6,7,8-tetrahydrofolate + formate + ATP = (6R)-10-formyltetrahydrofolate + ADP + phosphate. It participates in one-carbon metabolism; tetrahydrofolate interconversion. This is Formate--tetrahydrofolate ligase from Streptococcus mutans serotype c (strain ATCC 700610 / UA159).